The primary structure comprises 431 residues: Adenylosuccinate synthetase (431 aa).

GTP contacts are provided by residues 12–18 (GDEGKGK) and 40–42 (GHT). Residue D13 is the Proton acceptor of the active site. Mg(2+) contacts are provided by D13 and G40. Residues 13-16 (DEGK), 38-41 (NAGH), T128, R142, Q225, T240, and R304 contribute to the IMP site. Catalysis depends on H41, which acts as the Proton donor. Residue 300–306 (TTTGRPR) coordinates substrate. GTP-binding positions include R306, 332–334 (KLD), and 414–416 (GVG).

It belongs to the adenylosuccinate synthetase family. In terms of assembly, homodimer. Mg(2+) serves as cofactor.

It is found in the cytoplasm. The catalysed reaction is IMP + L-aspartate + GTP = N(6)-(1,2-dicarboxyethyl)-AMP + GDP + phosphate + 2 H(+). It functions in the pathway purine metabolism; AMP biosynthesis via de novo pathway; AMP from IMP: step 1/2. Its function is as follows. Plays an important role in the de novo pathway of purine nucleotide biosynthesis. Catalyzes the first committed step in the biosynthesis of AMP from IMP. The polypeptide is Adenylosuccinate synthetase (Thermomicrobium roseum (strain ATCC 27502 / DSM 5159 / P-2)).